The sequence spans 165 residues: Protein SprT (165 aa).

In terms of domain architecture, SprT-like spans Glu-20–Val-163. Position 78 (His-78) interacts with Zn(2+). The active site involves Glu-79. His-82 is a Zn(2+) binding site.

This sequence belongs to the SprT family. The cofactor is Zn(2+).

It is found in the cytoplasm. This chain is Protein SprT, found in Escherichia coli O139:H28 (strain E24377A / ETEC).